The primary structure comprises 299 residues: MKRPDYRTLQALDAVIRERGFERAAQKLCITQSAVSQRIKQLENMFGQPLLVRTVPPRPTEQGQKLLALLHQVELLEEEWLGDDNSGTTPLLLSLAVNADSLATWLLPALKTVLTDSPVRLNIQVEDETRTQERLRRGEVVGAVSIQPQPLPSCLVDRLGALDYLFVGSKEFAARYFPNGVTRSALLKAPAVAFDHLDDMHQAFLQQNFDLSPGSVPCHIVNSSEAFVQLARQGTTCCMIPHLQIERELAEGELIDLTPGLLQRRMLYWHRFSPESRLMRKVTDALLAHGHRVLRQDTA.

One can recognise an HTH lysR-type domain in the interval 4-60; the sequence is PDYRTLQALDAVIRERGFERAAQKLCITQSAVSQRIKQLENMFGQPLLVRTVPPRPT. Residues 21-40 constitute a DNA-binding region (H-T-H motif); it reads FERAAQKLCITQSAVSQRIK.

This sequence belongs to the LysR transcriptional regulatory family. As to quaternary structure, homodimer.

Its function is as follows. Controls the transcription of genes involved in arginine and lysine metabolism. The protein is HTH-type transcriptional regulator ArgP of Erwinia tasmaniensis (strain DSM 17950 / CFBP 7177 / CIP 109463 / NCPPB 4357 / Et1/99).